The primary structure comprises 363 residues: DNA replication and repair protein RecF (363 aa).

30-37 serves as a coordination point for ATP; that stretch reads GNNAQGKT.

The protein belongs to the RecF family.

The protein localises to the cytoplasm. Functionally, the RecF protein is involved in DNA metabolism; it is required for DNA replication and normal SOS inducibility. RecF binds preferentially to single-stranded, linear DNA. It also seems to bind ATP. The polypeptide is DNA replication and repair protein RecF (Clostridium acetobutylicum (strain ATCC 824 / DSM 792 / JCM 1419 / IAM 19013 / LMG 5710 / NBRC 13948 / NRRL B-527 / VKM B-1787 / 2291 / W)).